Here is a 110-residue protein sequence, read N- to C-terminus: Large ribosomal subunit protein P1B (110 aa).

A compositionally biased stretch (low complexity) spans 69 to 85 (PAAGGAGAPAAAAGGEA). A disordered region spans residues 69–110 (PAAGGAGAPAAAAGGEAAAEEQKEEAKEEEESDEDMGFGLFD). Positions 95–104 (KEEEESDEDM) are enriched in acidic residues.

Belongs to the eukaryotic ribosomal protein P1/P2 family. As to quaternary structure, component of the large ribosomal subunit (LSU). Mature yeast ribosomes consist of a small (40S) and a large (60S) subunit. The 40S small subunit contains 1 molecule of ribosomal RNA (18S rRNA) and at least 33 different proteins. The large 60S subunit contains 3 rRNA molecules (25S, 5.8S and 5S rRNA) and at least 46 different proteins. The acidic ribosomal P-proteins form the stalk structure of the 60S subunit. They are organized as a pentameric complex in which uL10/P0 interacts with 2 heterodimers of P1 and P2 proteins.

The protein localises to the cytoplasm. In terms of biological role, component of the ribosome, a large ribonucleoprotein complex responsible for the synthesis of proteins in the cell. The small ribosomal subunit (SSU) binds messenger RNAs (mRNAs) and translates the encoded message by selecting cognate aminoacyl-transfer RNA (tRNA) molecules. The large subunit (LSU) contains the ribosomal catalytic site termed the peptidyl transferase center (PTC), which catalyzes the formation of peptide bonds, thereby polymerizing the amino acids delivered by tRNAs into a polypeptide chain. The nascent polypeptides leave the ribosome through a tunnel in the LSU and interact with protein factors that function in enzymatic processing, targeting, and the membrane insertion of nascent chains at the exit of the ribosomal tunnel. The chain is Large ribosomal subunit protein P1B (rpp102) from Schizosaccharomyces pombe (strain 972 / ATCC 24843) (Fission yeast).